Consider the following 396-residue polypeptide: Tryptophan synthase beta chain (396 aa).

At lysine 88 the chain carries N6-(pyridoxal phosphate)lysine.

It belongs to the TrpB family. Tetramer of two alpha and two beta chains. The cofactor is pyridoxal 5'-phosphate.

It carries out the reaction (1S,2R)-1-C-(indol-3-yl)glycerol 3-phosphate + L-serine = D-glyceraldehyde 3-phosphate + L-tryptophan + H2O. Its pathway is amino-acid biosynthesis; L-tryptophan biosynthesis; L-tryptophan from chorismate: step 5/5. In terms of biological role, the beta subunit is responsible for the synthesis of L-tryptophan from indole and L-serine. This chain is Tryptophan synthase beta chain, found in Shewanella baltica (strain OS195).